Here is a 504-residue protein sequence, read N- to C-terminus: ADP,ATP carrier protein 3 (504 aa).

Transmembrane regions (helical) follow at residues 23 to 43, 59 to 79, 90 to 110, 146 to 166, 183 to 203, 230 to 250, 296 to 316, 329 to 349, 364 to 384, 386 to 406, 449 to 469, and 473 to 493; these read LKLF…FGAL, IISF…TILY, YVFY…AYII, YGLM…LMFW, PVLG…LVFF, EMLQ…MLLF, IALL…PWKA, VHFM…FMII, LLTP…IIFI, EIGS…VGAI, FGKS…PTAT, and IIIY…WDVV.

This sequence belongs to the ADP/ATP translocase tlc family.

Its subcellular location is the cell membrane. In terms of biological role, provides the rickettsial cell with host ATP in exchange for rickettsial ADP. This is an obligate exchange system. This energy acquiring activity is an important component of rickettsial parasitism. The chain is ADP,ATP carrier protein 3 (tlcC) from Rickettsia bellii (strain RML369-C).